Consider the following 378-residue polypeptide: UPF0754 membrane protein BCAH820_0954 (378 aa).

Helical transmembrane passes span 1 to 21 and 357 to 377; these read MNIW…GGFT and YLGA…LLFL.

Belongs to the UPF0754 family.

The protein localises to the cell membrane. In Bacillus cereus (strain AH820), this protein is UPF0754 membrane protein BCAH820_0954.